The following is a 1049-amino-acid chain: Cellulose synthase A catalytic subunit 4 [UDP-forming] (1049 aa).

At 1–215 (MEPNTMASFD…ISSSKISPYR (215 aa)) the chain is on the cytoplasmic side. Zn(2+)-binding residues include cysteine 23, cysteine 26, cysteine 42, cysteine 45, cysteine 50, cysteine 53, cysteine 65, and cysteine 68. The segment at 23–69 (CKVCGDEVKDDDNGQTFVACHVCVYPVCKPCYEYERSNGNKCCPQCN) adopts an RING-type; degenerate zinc-finger fold. Residues 76-98 (KGSPKIAGDEENNGPDDSDDELN) form a disordered region. Positions 84 to 96 (DEENNGPDDSDDE) are enriched in acidic residues. The residue at position 135 (serine 135) is a Phosphoserine. Residues 216–236 (IVIVLRLVILVFFFRFRILTP) traverse the membrane as a helical segment. At 237–239 (AKD) the chain is on the extracellular side. A helical transmembrane segment spans residues 240 to 260 (AYPLWLISVICEIWFALSWIL). Residues 261–831 (DQFPKWFPIN…INTIVYPFTS (571 aa)) lie on the Cytoplasmic side of the membrane. 4 residues coordinate UDP-alpha-D-glucose: serine 299, lysine 305, glutamate 306, and aspartate 335. Aspartate 335 is a catalytic residue. Residues 389-416 (VKDRRAMKREYEEFKVRINALVAKAQKK) adopt a coiled-coil conformation. Lysine 476 contacts UDP-alpha-D-glucose. Mn(2+) is bound by residues lysine 477 and aspartate 501. Residue aspartate 748 is part of the active site. Residues 832 to 852 (IPLLAYCTIPAVCLLTGKFII) traverse the membrane as a helical segment. Topologically, residues 853-857 (PTINN) are extracellular. Residues 858–878 (FASIWFLALFLSIIATAILEL) traverse the membrane as a helical segment. The Cytoplasmic segment spans residues 879–895 (RWSGVSINDLWRNEQFW). A helical transmembrane segment spans residues 896-916 (VIGGVSAHLFAVFQGLLKVLF). Topologically, residues 917 to 945 (GVDTNFTVTSKGASDEADEFGDLYLFKWT) are extracellular. Asparagine 921 carries an N-linked (GlcNAc...) asparagine glycan. The chain crosses the membrane as a helical span at residues 946–966 (TLLIPPTTLIILNMVGVVAGV). Residues 967-977 (SDAINNGYGSW) lie on the Cytoplasmic side of the membrane. The helical transmembrane segment at 978-998 (GPLFGKLFFAFWVIVHLYPFL) threads the bilayer. The Extracellular portion of the chain corresponds to 999–1007 (KGLMGRQNR). A helical transmembrane segment spans residues 1008-1028 (TPTIVVLWSILLASIFSLVWV). Residues 1029 to 1049 (RIDPFLPKQTGPLLKQCGVDC) are Cytoplasmic-facing.

Belongs to the glycosyltransferase 2 family. Plant cellulose synthase subfamily. As to quaternary structure, interacts with CESA7 and CESA8. Assembly with CESA7 and CESA8 is required for functional complex and localization in secondary cell wall deposition sites. Interacts with STL1 and STL2, but not with GOT1. It depends on Zn(2+) as a cofactor. Mn(2+) is required as a cofactor. In terms of processing, S-acylated. Confined to secondary cell wall developing tissues such as xylems and interfascicular regions. Expressed in roots, hypocotyls, leaves, inflorescences and flowers.

The protein localises to the cell membrane. It carries out the reaction [(1-&gt;4)-beta-D-glucosyl](n) + UDP-alpha-D-glucose = [(1-&gt;4)-beta-D-glucosyl](n+1) + UDP + H(+). Its pathway is glycan metabolism; plant cellulose biosynthesis. Its function is as follows. Catalytic subunit of cellulose synthase terminal complexes ('rosettes'), required for beta-1,4-glucan microfibril crystallization, a major mechanism of the cell wall formation. Involved in the secondary cell wall formation. Required for the xylem cell wall thickening. The sequence is that of Cellulose synthase A catalytic subunit 4 [UDP-forming] from Arabidopsis thaliana (Mouse-ear cress).